Consider the following 46-residue polypeptide: Viscotoxin-C1 (46 aa).

3 disulfide bridges follow: C3/C40, C4/C32, and C16/C26.

In terms of assembly, monomer.

It localises to the secreted. Its function is as follows. Thionins are small plant proteins which are toxic to animal cells. They seem to exert their toxic effect at the level of the cell membrane. Their precise function is not known. This chain is Viscotoxin-C1, found in Viscum album (European mistletoe).